The following is a 267-amino-acid chain: Interleukin-1 beta (267 aa).

The propeptide occupies 1-115 (MAPVPELTSE…DTWDDGFVCD (115 aa)).

The protein belongs to the IL-1 family. Monomer. In its precursor form, weakly interacts with full-length MEFV; the mature cytokine does not interact at all. Interacts with integrins ITGAV:ITGBV and ITGA5:ITGB1; integrin-binding is required for IL1B signaling. Interacts with cargo receptor TMED10; the interaction is direct and is required for the secretion of IL1B mature form. Interacts with HSP90AB1; the interaction facilitates cargo translocation into the ERGIC. Interacts with HSP90B1; the interaction facilitates cargo translocation into the ERGIC.

Its subcellular location is the cytoplasm. It localises to the cytosol. The protein resides in the secreted. The protein localises to the lysosome. It is found in the extracellular exosome. Potent pro-inflammatory cytokine. Initially discovered as the major endogenous pyrogen, induces prostaglandin synthesis, neutrophil influx and activation, T-cell activation and cytokine production, B-cell activation and antibody production, and fibroblast proliferation and collagen production. Promotes Th17 differentiation of T-cells. Synergizes with IL12/interleukin-12 to induce IFNG synthesis from T-helper 1 (Th1) cells. Plays a role in angiogenesis by inducing VEGF production synergistically with TNF and IL6. Involved in transduction of inflammation downstream of pyroptosis: its mature form is specifically released in the extracellular milieu by passing through the gasdermin-D (GSDMD) pore. The chain is Interleukin-1 beta (IL1B) from Felis catus (Cat).